A 473-amino-acid chain; its full sequence is Adenosylhomocysteinase (473 aa).

Thr64, Asp139, and Glu199 together coordinate substrate. Position 200 to 202 (200 to 202 (TTT)) interacts with NAD(+). Substrate is bound by residues Lys229 and Asp233. Residues Asn234, 263-268 (GYGDVG), Glu286, Asn321, 342-344 (IGH), and Asn387 each bind NAD(+).

The protein belongs to the adenosylhomocysteinase family. NAD(+) is required as a cofactor.

It localises to the cytoplasm. The enzyme catalyses S-adenosyl-L-homocysteine + H2O = L-homocysteine + adenosine. It participates in amino-acid biosynthesis; L-homocysteine biosynthesis; L-homocysteine from S-adenosyl-L-homocysteine: step 1/1. Functionally, may play a key role in the regulation of the intracellular concentration of adenosylhomocysteine. The chain is Adenosylhomocysteinase from Paraburkholderia phymatum (strain DSM 17167 / CIP 108236 / LMG 21445 / STM815) (Burkholderia phymatum).